A 108-amino-acid polypeptide reads, in one-letter code: Thiosulfate sulfurtransferase GlpE (108 aa).

The Rhodanese domain occupies 17-105 (KDGSAALVDI…WARQYPQDVE (89 aa)). Cysteine 65 functions as the Cysteine persulfide intermediate in the catalytic mechanism.

It belongs to the GlpE family.

It is found in the cytoplasm. It catalyses the reaction thiosulfate + hydrogen cyanide = thiocyanate + sulfite + 2 H(+). The enzyme catalyses thiosulfate + [thioredoxin]-dithiol = [thioredoxin]-disulfide + hydrogen sulfide + sulfite + 2 H(+). Functionally, transferase that catalyzes the transfer of sulfur from thiosulfate to thiophilic acceptors such as cyanide or dithiols. May function in a CysM-independent thiosulfate assimilation pathway by catalyzing the conversion of thiosulfate to sulfite, which can then be used for L-cysteine biosynthesis. This chain is Thiosulfate sulfurtransferase GlpE, found in Serratia proteamaculans (strain 568).